The following is a 151-amino-acid chain: Large ribosomal subunit protein uL15 (151 aa).

Residues M1–M57 form a disordered region. Residues K12–R23 are compositionally biased toward basic residues. The span at I25–M37 shows a compositional bias: gly residues.

It belongs to the universal ribosomal protein uL15 family. Part of the 50S ribosomal subunit.

Functionally, binds to the 23S rRNA. This is Large ribosomal subunit protein uL15 from Synechococcus sp. (strain CC9605).